A 400-amino-acid polypeptide reads, in one-letter code: Acyl-CoA dehydrogenase FadE26 (400 aa).

Residues 127 to 130 (IGYS), T136, and S162 contribute to the FAD site. E247 serves as the catalytic Proton acceptor. 380–382 (TNE) contacts FAD.

Belongs to the acyl-CoA dehydrogenase family. Heterotetramer (dimer of heterodimers) composed of FadE26 and FadE27. Requires FAD as cofactor.

It catalyses the reaction (25S)-3-oxocholest-4-en-26-oyl-CoA + A = 3-oxo-cholest-4,24-dien-26-oyl-CoA + AH2. It participates in steroid metabolism; cholesterol degradation. Its activity is regulated as follows. Uncompetitively inhibited by high concentration of 3-OCS-CoA. Functionally, involved in the first cycle of side chain dehydrogenation in the beta-oxidation of cholesterol catabolism. It contributes partly to the virulence by increasing the efficiency of beta-oxidation. Catalyzes the dehydrogenation of acyl-CoA ester side chains of (25S)-3-oxo-cholest-4-en-26-oyl-CoA (3-OCS-CoA) to yield (24E)-3-oxo-cholest-4,24-dien-26-oyl-CoA. Also able to dehydrogenate steroyl-CoA such as 3-oxo-chol-4-en-24-oyl-CoA (3-OCO-CoA) as well as 3-oxo-4-pregnene-20-carboxyl-CoA (3-OPC-CoA). It dehydrogenates only (25S)-OCS-CoA diastereomer. The polypeptide is Acyl-CoA dehydrogenase FadE26 (fadE26) (Mycobacterium tuberculosis (strain ATCC 25618 / H37Rv)).